The sequence spans 226 residues: Leucyl/phenylalanyl-tRNA--protein transferase (226 aa).

The protein belongs to the L/F-transferase family.

It is found in the cytoplasm. The enzyme catalyses N-terminal L-lysyl-[protein] + L-leucyl-tRNA(Leu) = N-terminal L-leucyl-L-lysyl-[protein] + tRNA(Leu) + H(+). It catalyses the reaction N-terminal L-arginyl-[protein] + L-leucyl-tRNA(Leu) = N-terminal L-leucyl-L-arginyl-[protein] + tRNA(Leu) + H(+). The catalysed reaction is L-phenylalanyl-tRNA(Phe) + an N-terminal L-alpha-aminoacyl-[protein] = an N-terminal L-phenylalanyl-L-alpha-aminoacyl-[protein] + tRNA(Phe). Its function is as follows. Functions in the N-end rule pathway of protein degradation where it conjugates Leu, Phe and, less efficiently, Met from aminoacyl-tRNAs to the N-termini of proteins containing an N-terminal arginine or lysine. The sequence is that of Leucyl/phenylalanyl-tRNA--protein transferase from Pseudomonas entomophila (strain L48).